A 514-amino-acid polypeptide reads, in one-letter code: 2,3-bisphosphoglycerate-independent phosphoglycerate mutase (514 aa).

Mn(2+)-binding residues include aspartate 14 and serine 64. Serine 64 serves as the catalytic Phosphoserine intermediate. Residues histidine 125, 155-156 (RD), arginine 187, arginine 193, 263-266 (RADR), and lysine 336 each bind substrate. 5 residues coordinate Mn(2+): aspartate 403, histidine 407, aspartate 444, histidine 445, and histidine 463.

This sequence belongs to the BPG-independent phosphoglycerate mutase family. In terms of assembly, monomer. Mn(2+) serves as cofactor.

The enzyme catalyses (2R)-2-phosphoglycerate = (2R)-3-phosphoglycerate. Its pathway is carbohydrate degradation; glycolysis; pyruvate from D-glyceraldehyde 3-phosphate: step 3/5. With respect to regulation, insensitive to vanadate. Functionally, catalyzes the interconversion of 2-phosphoglycerate (2-PGA) and 3-phosphoglycerate (3-PGA). The sequence is that of 2,3-bisphosphoglycerate-independent phosphoglycerate mutase from Escherichia coli (strain K12).